The sequence spans 518 residues: Flagellin (518 aa).

It belongs to the bacterial flagellin family.

It is found in the secreted. It localises to the bacterial flagellum. Functionally, flagellin is the subunit protein which polymerizes to form the filaments of bacterial flagella. This is Flagellin (flaA) from Aquifex aeolicus (strain VF5).